A 485-amino-acid polypeptide reads, in one-letter code: MELWKKSLKELSDLVKSKEVKPSEIVEAFIERKNQVEPKIKAYVTALDDLALEKAKKRDQELTKLENIPDLFGLPIAIKDNISTKDIKTTCSSKMLENFVPVYDATVIERLKSQGYVITGKTNLDEFAMGSSTENSAFFPTRNPWDLERVPGGSSGGSAAVVASGMAPASLGSDTGGSIRQPAAFCGVVGLKPTYGRVSRYGLVAFASSLDQIGPFGRTVEDVAMIMNVISGKDPKDSTSRSIPVPNYLESLNKDVKGLKIGLPKEFYTEDLNPQIKEIILNAVKQLEKEGMTAHEISLPYTKYAIETYYIIAPSEASSNLARFDGVRYGYRAKEYKNLEEMYSKTRDEGFGAEVKRRIMIGTYALSSGYYDAYYLKAQKVRTLIYQDYMNAFEKVDVIITPTTPDVAFKIGEKSNDPIQMYLSDIFTVSANMATVPALSIPCGFKDNLPVGMQIIGKPFDEETILQVAYKFQSLNDYHKRFPEV.

Active-site charge relay system residues include Lys-79 and Ser-154. The Acyl-ester intermediate role is filled by Ser-178.

Belongs to the amidase family. GatA subfamily. Heterotrimer of A, B and C subunits.

The enzyme catalyses L-glutamyl-tRNA(Gln) + L-glutamine + ATP + H2O = L-glutaminyl-tRNA(Gln) + L-glutamate + ADP + phosphate + H(+). In terms of biological role, allows the formation of correctly charged Gln-tRNA(Gln) through the transamidation of misacylated Glu-tRNA(Gln) in organisms which lack glutaminyl-tRNA synthetase. The reaction takes place in the presence of glutamine and ATP through an activated gamma-phospho-Glu-tRNA(Gln). This chain is Glutamyl-tRNA(Gln) amidotransferase subunit A, found in Sulfurihydrogenibium sp. (strain YO3AOP1).